An 847-amino-acid polypeptide reads, in one-letter code: Aryl hydrocarbon receptor (847 aa).

The segment at 1-39 (MNGGGANITYASRKRRKPVQKTVKPIPAEGIKSNPSKRH) is disordered. Short sequence motifs (nuclear localization signal) lie at residues 13–16 (RKRR) and 37–42 (KRHRDR). Residues 27–80 (PAEGIKSNPSKRHRDRLNTELDRLASLLPFPQDVINKLDKLSVLRLSVSYLRAK) form the bHLH domain. The DNA-binding stretch occupies residues 38-66 (RHRDRLNTELDRLASLLPFPQDVINKLDK). Required for maintaining the overall integrity of the AHR:ARNT heterodimer and its transcriptional activity regions lie at residues 50 to 82 (LASL…AKSF), 117 to 125 (LLQALNGFV), and 264 to 266 (FAI). The short motif at 64 to 72 (LDKLSVLRL) is the Nuclear export signal element. The region spanning 120-173 (ALNGFVLVVTVDALVFYASSTIQDYLGFQQSDVIHQSVYELIHTEDRAEFQRQL) is the PAS 1 domain. Residues 281-336 (KNFIFRTKHKLDFTPTGCDAKGQIVLGYTEAELCMRGSGYQFIHAADMLYCAESHI) enclose the PAS 2 domain. Positions 346–384 (LAVFRLLTKDNRWAWVQSNARFIYKNGRPDFIIATQRPL) constitute a PAC domain. Disordered stretches follow at residues 430-452 (KSGT…VHPS) and 825-847 (HLPP…GRLL). Residues 440-452 (TKPTPSKDSVHPS) show a composition bias toward polar residues.

As to quaternary structure, homodimer. Heterodimer; efficient DNA binding requires dimerization with another bHLH protein. Binds MYBBP1A. Interacts with coactivators including SRC-1, RIP140 and NOCA7, and with the corepressor SMRT. Interacts with NEDD8 and IVNS1ABP. Interacts with BMAL1. Interacts with HSP90AB1. Interacts with ARNT; the heterodimer ARNT:AHR binds to core DNA sequence 5'-TGCGTG-3' within the dioxin response element (DRE) of target gene promoters and activates their transcription. Interacts with TIPARP; leading to mono-ADP-ribosylation of AHR and subsequent inhibition of AHR. In terms of processing, mono-ADP-ribosylated, leading to inhibit transcription activator activity of AHR.

The protein resides in the cytoplasm. It is found in the nucleus. Functionally, ligand-activated transcription factor that enables cells to adapt to changing conditions by sensing compounds from the environment, diet, microbiome and cellular metabolism, and which plays important roles in development, immunity and cancer. Upon ligand binding, translocates into the nucleus, where it heterodimerizes with ARNT and induces transcription by binding to xenobiotic response elements (XRE). Regulates a variety of biological processes, including angiogenesis, hematopoiesis, drug and lipid metabolism, cell motility and immune modulation. Xenobiotics can act as ligands: upon xenobiotic-binding, activates the expression of multiple phase I and II xenobiotic chemical metabolizing enzyme genes (such as the CYP1A1 gene). Mediates biochemical and toxic effects of halogenated aromatic hydrocarbons. Next to xenobiotics, natural ligands derived from plants, microbiota, and endogenous metabolism are potent AHR agonists. Tryptophan (Trp) derivatives constitute an important class of endogenous AHR ligands. Acts as a negative regulator of anti-tumor immunity: indoles and kynurenic acid generated by Trp catabolism act as ligand and activate AHR, thereby promoting AHR-driven cancer cell motility and suppressing adaptive immunity. Regulates the circadian clock by inhibiting the basal and circadian expression of the core circadian component PER1. Inhibits PER1 by repressing the CLOCK-BMAL1 heterodimer mediated transcriptional activation of PER1. The heterodimer ARNT:AHR binds to core DNA sequence 5'-TGCGTG-3' within the dioxin response element (DRE) of target gene promoters and activates their transcription. The sequence is that of Aryl hydrocarbon receptor (AHR) from Oryctolagus cuniculus (Rabbit).